We begin with the raw amino-acid sequence, 1451 residues long: Dual 3',5'-cyclic-AMP and -GMP phosphodiesterase 11 (1451 aa).

Disordered regions lie at residues 1–54 (MGQA…PQIQ), 75–100 (ATTPLQFQPTGRMNTEQGGTGYGGYG), 125–169 (LPAH…QVQQ), 235–262 (GNDVVSSTSPTHANGQTSSSRGGSGATT), and 327–374 (QHHH…GSGG). Residues 11–21 (RGCRYKNKNKS) are compositionally biased toward basic residues. Positions 24-45 (QQQQQQQQQQQQQQQHQQQQQQ) are enriched in low complexity. Positions 77–91 (TPLQFQPTGRMNTEQ) are enriched in polar residues. Low complexity-rich tracts occupy residues 135–147 (SGAAPPSSSNGSS) and 160–169 (QQQQQYQVQQ). The segment covering 235–248 (GNDVVSSTSPTHAN) has biased composition (polar residues). The span at 327–340 (QHHHNHAHLHHSQH) shows a compositional bias: basic residues. The segment covering 341 to 355 (SHYQAGGAVGSSSLG) has biased composition (low complexity). The span at 356–374 (STGGASGAGGAPSLGGSGG) shows a compositional bias: gly residues. 2 GAF domains span residues 419–572 (EVRT…GIGL) and 604–754 (TIEH…GMGI). The region spanning 783 to 1107 (ATMDEAHRLR…GHWIDLADVV (325 aa)) is the PDEase domain. The active-site Proton donor is the H860. Positions 864, 900, 901, and 1011 each coordinate a divalent metal cation. Disordered regions lie at residues 1109 to 1171 (TKTS…SNTN), 1200 to 1248 (DEQA…TPVS), 1268 to 1305 (QTSNQAQTQKQRCKSCDHSRSGLQVRKTSSLRGAQELD), and 1325 to 1364 (INNHSHHHNHSHSHNHNHHHHHHHHSHHNHSQHGIGIGSA). Composition is skewed to low complexity over residues 1142-1171 (ASEAEVAVDSPSEKASVNGSNVANNSSNTN) and 1218-1234 (CRSNSTCSSSTASSCLS). Residues 1268–1277 (QTSNQAQTQK) show a composition bias toward polar residues. A compositionally biased stretch (basic residues) spans 1328-1355 (HSHHHNHSHSHNHNHHHHHHHHSHHNHS).

Belongs to the cyclic nucleotide phosphodiesterase family. It depends on a divalent metal cation as a cofactor. In terms of tissue distribution, in adults, it is enriched in Malpighian tubules.

It carries out the reaction 3',5'-cyclic GMP + H2O = GMP + H(+). The enzyme catalyses 3',5'-cyclic AMP + H2O = AMP + H(+). In terms of biological role, plays a role in signal transduction by regulating the intracellular concentration of cyclic nucleotides cAMP and cGMP. Dual-specificity phosphodiesterase that catalyzes the hydrolysis of both cAMP and cGMP to 5'-AMP and 5'-GMP, respectively. This Drosophila melanogaster (Fruit fly) protein is Dual 3',5'-cyclic-AMP and -GMP phosphodiesterase 11 (Pde11).